A 571-amino-acid polypeptide reads, in one-letter code: Proline--tRNA ligase (571 aa).

It belongs to the class-II aminoacyl-tRNA synthetase family. ProS type 1 subfamily. As to quaternary structure, homodimer.

It localises to the cytoplasm. The catalysed reaction is tRNA(Pro) + L-proline + ATP = L-prolyl-tRNA(Pro) + AMP + diphosphate. Its function is as follows. Catalyzes the attachment of proline to tRNA(Pro) in a two-step reaction: proline is first activated by ATP to form Pro-AMP and then transferred to the acceptor end of tRNA(Pro). As ProRS can inadvertently accommodate and process non-cognate amino acids such as alanine and cysteine, to avoid such errors it has two additional distinct editing activities against alanine. One activity is designated as 'pretransfer' editing and involves the tRNA(Pro)-independent hydrolysis of activated Ala-AMP. The other activity is designated 'posttransfer' editing and involves deacylation of mischarged Ala-tRNA(Pro). The misacylated Cys-tRNA(Pro) is not edited by ProRS. The sequence is that of Proline--tRNA ligase from Photobacterium profundum (strain SS9).